Consider the following 266-residue polypeptide: Indole-3-glycerol phosphate synthase (266 aa).

This sequence belongs to the TrpC family.

It catalyses the reaction 1-(2-carboxyphenylamino)-1-deoxy-D-ribulose 5-phosphate + H(+) = (1S,2R)-1-C-(indol-3-yl)glycerol 3-phosphate + CO2 + H2O. Its pathway is amino-acid biosynthesis; L-tryptophan biosynthesis; L-tryptophan from chorismate: step 4/5. This Herminiimonas arsenicoxydans protein is Indole-3-glycerol phosphate synthase.